The primary structure comprises 100 residues: NADH-quinone oxidoreductase subunit K (100 aa).

3 helical membrane passes run 4–24, 29–49, and 61–81; these read VTWYLWLAAMLFTIGLSGVLL, LIVMMSVELMLNAANLTFLAF, and IAFFVIAVAAAEAAVGLAVVI.

Belongs to the complex I subunit 4L family. NDH-1 is composed of 14 different subunits. Subunits NuoA, H, J, K, L, M, N constitute the membrane sector of the complex.

The protein localises to the cell inner membrane. It catalyses the reaction a quinone + NADH + 5 H(+)(in) = a quinol + NAD(+) + 4 H(+)(out). Its function is as follows. NDH-1 shuttles electrons from NADH, via FMN and iron-sulfur (Fe-S) centers, to quinones in the respiratory chain. The immediate electron acceptor for the enzyme in this species is believed to be ubiquinone. Couples the redox reaction to proton translocation (for every two electrons transferred, four hydrogen ions are translocated across the cytoplasmic membrane), and thus conserves the redox energy in a proton gradient. The chain is NADH-quinone oxidoreductase subunit K from Anaeromyxobacter sp. (strain Fw109-5).